The primary structure comprises 473 residues: Phenolic acid decarboxylase (473 aa).

Mn(2+) contacts are provided by N160, H182, and E224. Prenylated FMN-binding positions include 160–165 and 181–182; these read NVGIYR and QH. E273 acts as the Proton donor in catalysis.

It belongs to the UbiD family. YclC subfamily. The cofactor is prenylated FMN. It depends on Mn(2+) as a cofactor.

The enzyme catalyses 4-hydroxybenzoate + H(+) = phenol + CO2. It catalyses the reaction vanillate + H(+) = guaiacol + CO2. Functionally, involved in the non-oxidative decarboxylation and detoxification of phenolic derivatives under both aerobic and anaerobic conditions. Phenolic acid decarboxylase that catalyzes the reversible decarboxylation of 4-hydroxybenzoate and vanillate. Could also catalyze the decarboxylation of salicylate. Is not active on di- and tri-hydroxybenzoate derivatives. This is Phenolic acid decarboxylase from Bacillus subtilis (strain 168).